Reading from the N-terminus, the 671-residue chain is DNA ligase (671 aa).

NAD(+) contacts are provided by residues 32-36 (DAEYD), 81-82 (SL), and glutamate 113. Catalysis depends on lysine 115, which acts as the N6-AMP-lysine intermediate. NAD(+) is bound by residues arginine 136, glutamate 173, lysine 290, and lysine 314. Zn(2+) is bound by residues cysteine 408, cysteine 411, cysteine 426, and cysteine 432. In terms of domain architecture, BRCT spans 593–671 (EIDSPFAGKT…EAEMIRLLGA (79 aa)).

It belongs to the NAD-dependent DNA ligase family. LigA subfamily. The cofactor is Mg(2+). Mn(2+) serves as cofactor.

It carries out the reaction NAD(+) + (deoxyribonucleotide)n-3'-hydroxyl + 5'-phospho-(deoxyribonucleotide)m = (deoxyribonucleotide)n+m + AMP + beta-nicotinamide D-nucleotide.. DNA ligase that catalyzes the formation of phosphodiester linkages between 5'-phosphoryl and 3'-hydroxyl groups in double-stranded DNA using NAD as a coenzyme and as the energy source for the reaction. It is essential for DNA replication and repair of damaged DNA. The protein is DNA ligase of Salmonella heidelberg (strain SL476).